We begin with the raw amino-acid sequence, 513 residues long: Serine/threonine-protein kinase pakH (513 aa).

The 253-residue stretch at phenylalanine 42–isoleucine 294 folds into the Protein kinase domain. ATP-binding positions include leucine 48–valine 56 and lysine 71. Aspartate 163 acts as the Proton acceptor in catalysis. Residues lysine 313–aspartate 358 are disordered. A compositionally biased stretch (low complexity) spans asparagine 331 to asparagine 357. Residues isoleucine 493 to phenylalanine 512 form a helical membrane-spanning segment.

It belongs to the protein kinase superfamily. STE Ser/Thr protein kinase family. STE20 subfamily. Mg(2+) is required as a cofactor.

It localises to the membrane. It carries out the reaction L-seryl-[protein] + ATP = O-phospho-L-seryl-[protein] + ADP + H(+). The enzyme catalyses L-threonyl-[protein] + ATP = O-phospho-L-threonyl-[protein] + ADP + H(+). The sequence is that of Serine/threonine-protein kinase pakH (pakH-1) from Dictyostelium discoideum (Social amoeba).